The following is an 824-amino-acid chain: A-adding tRNA nucleotidyltransferase (824 aa).

CBS domains are found at residues 305–363 (MNTP…DEPI) and 367–423 (VNRD…LEKL). 459–462 (GVVR) provides a ligand contact to ATP. Residues Asp-472 and Asp-474 each contribute to the Mg(2+) site. ATP is bound by residues 545–546 (RD), Asn-550, 590–599 (DPVRILRALR), Arg-603, and Arg-632.

It belongs to the tRNA nucleotidyltransferase/poly(A) polymerase family. Requires Mg(2+) as cofactor.

It carries out the reaction a tRNA with a 3' CC end + ATP = a tRNA with a 3' CCA end + diphosphate. Its function is as follows. tRNA nucleotidyltransferase involved in the synthesis of the tRNA CCA terminus. Adds the terminal adenosine residue to tRNA. Can incorporate CMP into tRNA ending with C74C75 (tRNACC), with very weak efficiency. This Aquifex aeolicus (strain VF5) protein is A-adding tRNA nucleotidyltransferase.